We begin with the raw amino-acid sequence, 62 residues long: Large ribosomal subunit protein eL24 (62 aa).

The Zn(2+) site is built by Cys-6, Cys-9, Cys-32, and Cys-36. A C4-type zinc finger spans residues 6 to 36 (CSFCEGTIEPGCGKKYVKKDGSVMHFCSSKC).

It belongs to the eukaryotic ribosomal protein eL24 family. As to quaternary structure, part of the 50S ribosomal subunit. Forms a cluster with proteins L3 and L14. Zn(2+) serves as cofactor.

In terms of biological role, binds to the 23S rRNA. This Methanococcus maripaludis (strain C5 / ATCC BAA-1333) protein is Large ribosomal subunit protein eL24.